The sequence spans 116 residues: uncharacterized protein (116 aa).

Residues 6–60 (LKKCRKQKKLTQQNMADKLGITRPAYTAYELGSREPDYKTLINISNILDVSLDYL) enclose the HTH cro/C1-type domain. Residues 17–36 (QQNMADKLGITRPAYTAYEL) constitute a DNA-binding region (H-T-H motif).

This is an uncharacterized protein from Bacillus subtilis (strain 168).